We begin with the raw amino-acid sequence, 515 residues long: Centromere protein T (515 aa).

2 disordered regions span residues A24 to Q156 and L271 to K411. Residues P29 to S44 show a composition bias toward basic residues. The segment covering Q45–T58 has biased composition (polar residues). Position 86 is a phosphothreonine (T86). Positions I94–P375 are flexible stalk domain. Residues S296–S306 are compositionally biased toward polar residues. S313, S333, S345, S346, S357, and S376 each carry phosphoserine.

Belongs to the CENP-T/CNN1 family. Component of the CENPA-CAD complex, composed of CENPI, CENPK, CENPL, CENPO, CENPP, CENPQ, CENPR and CENPS. The CENPA-CAD complex is probably recruited on centromeres by the CENPA-NAC complex, at least composed of CENPA, CENPC, CENPH, CENPM, CENPN, CENPT and CENPU. Identified in a centromeric complex containing histones H2A, H2B, H3 and H4, and at least CENPA, CENPB, CENPC, CENPT, CENPN, HJURP, SUPT16H, SSRP1 and RSF1. Interacts (via N-terminus) with the NDC80 complex. Heterodimer with CENPW; this dimer coassembles with CENPS-CENPX heterodimers at centromeres to form the tetrameric CENP-T-W-S-X complex. In terms of processing, dynamically phosphorylated during the cell cycle. Phosphorylated during G2 phase, metaphase and anaphase, but not during telophase or G1 phase.

Its subcellular location is the nucleus. It is found in the chromosome. The protein localises to the centromere. It localises to the kinetochore. In terms of biological role, component of the CENPA-NAC (nucleosome-associated) complex, a complex that plays a central role in assembly of kinetochore proteins, mitotic progression and chromosome segregation. The CENPA-NAC complex recruits the CENPA-CAD (nucleosome distal) complex and may be involved in incorporation of newly synthesized CENPA into centromeres. Part of a nucleosome-associated complex that binds specifically to histone H3-containing nucleosomes at the centromere, as opposed to nucleosomes containing CENPA. Component of the heterotetrameric CENP-T-W-S-X complex that binds and supercoils DNA, and plays an important role in kinetochore assembly. CENPT has a fundamental role in kinetochore assembly and function. It is one of the inner kinetochore proteins, with most further proteins binding downstream. Required for normal chromosome organization and normal progress through mitosis. This Mus musculus (Mouse) protein is Centromere protein T (Cenpt).